Reading from the N-terminus, the 119-residue chain is Aspartate 1-decarboxylase (119 aa).

The active-site Schiff-base intermediate with substrate; via pyruvic acid is the serine 25. Position 25 is a pyruvic acid (Ser) (serine 25). Threonine 57 provides a ligand contact to substrate. Tyrosine 58 functions as the Proton donor in the catalytic mechanism. 73-75 (GAA) is a substrate binding site.

This sequence belongs to the PanD family. Heterooctamer of four alpha and four beta subunits. The cofactor is pyruvate. Is synthesized initially as an inactive proenzyme, which is activated by self-cleavage at a specific serine bond to produce a beta-subunit with a hydroxyl group at its C-terminus and an alpha-subunit with a pyruvoyl group at its N-terminus.

It localises to the cytoplasm. It carries out the reaction L-aspartate + H(+) = beta-alanine + CO2. Its pathway is cofactor biosynthesis; (R)-pantothenate biosynthesis; beta-alanine from L-aspartate: step 1/1. Functionally, catalyzes the pyruvoyl-dependent decarboxylation of aspartate to produce beta-alanine. The sequence is that of Aspartate 1-decarboxylase from Ruthia magnifica subsp. Calyptogena magnifica.